A 397-amino-acid polypeptide reads, in one-letter code: Lymphoid enhancer-binding factor 1 (397 aa).

The CTNNB1-binding stretch occupies residues M1–E60. K25 participates in a covalent cross-link: Glycyl lysine isopeptide (Lys-Gly) (interchain with G-Cter in SUMO). The tract at residues E38–K102 is disordered. Positions P80 to D96 are enriched in basic and acidic residues. S130 carries the post-translational modification Phosphoserine. A Phosphothreonine; by NLK modification is found at T153. S164 bears the Phosphoserine; by NLK mark. Disordered stretches follow at residues S164–E190 and V266–H296. K267 participates in a covalent cross-link: Glycyl lysine isopeptide (Lys-Gly) (interchain with G-Cter in SUMO). A compositionally biased stretch (basic and acidic residues) spans K267–R294. A DNA-binding region (HMG box) is located at residues I297 to S365. A disordered region spans residues R367–I397.

The protein belongs to the TCF/LEF family. Binds the armadillo repeat of CTNNB1 and forms a stable complex. Interacts with TLE1, PIASG, ALYREF/THOC4, EP300, MDFI and MDFIC. Interacts with DAZAP2. In terms of processing, phosphorylated at Thr-153 and/or Ser-164 by NLK. Phosphorylation by NLK at these sites represses LEF1-mediated transcriptional activation of target genes of the canonical Wnt signaling pathway.

The protein localises to the nucleus. In terms of biological role, transcription factor that binds DNA in a sequence-specific manner. Participates in the Wnt signaling pathway. Activates transcription of target genes in the presence of CTNNB1 and EP300. PIASG antagonizes both Wnt-dependent and Wnt-independent activation by LEF1. TLE1, TLE2, TLE3 and TLE4 repress transactivation mediated by LEF1 and CTNNB1. Regulates T-cell receptor alpha enhancer function. Required for IL17A expressing gamma-delta T-cell maturation and development, via binding to regulator loci of BLK to modulate expression. Acts as a positive regulator of odontoblast differentiation during mesenchymal tooth germ formation, expression is repressed during the bell stage by MSX1-mediated inhibition of CTNNB1 signaling. May play a role in hair cell differentiation and follicle morphogenesis. This is Lymphoid enhancer-binding factor 1 from Rattus norvegicus (Rat).